The primary structure comprises 244 residues: 3-oxoacyl-[acyl-carrier-protein] reductase FabG (244 aa).

NADP(+) contacts are provided by residues 9–12, 60–61, and asparagine 87; these read GASR and NV. Serine 139 contributes to the substrate binding site. The active-site Proton acceptor is tyrosine 152. NADP(+) contacts are provided by residues 152-156 and isoleucine 185; that span reads YVATK.

It belongs to the short-chain dehydrogenases/reductases (SDR) family. Homotetramer.

It carries out the reaction a (3R)-hydroxyacyl-[ACP] + NADP(+) = a 3-oxoacyl-[ACP] + NADPH + H(+). It functions in the pathway lipid metabolism; fatty acid biosynthesis. In terms of biological role, catalyzes the NADPH-dependent reduction of beta-ketoacyl-ACP substrates to beta-hydroxyacyl-ACP products, the first reductive step in the elongation cycle of fatty acid biosynthesis. This Staphylococcus epidermidis (strain ATCC 35984 / DSM 28319 / BCRC 17069 / CCUG 31568 / BM 3577 / RP62A) protein is 3-oxoacyl-[acyl-carrier-protein] reductase FabG (fabG).